Consider the following 487-residue polypeptide: MSISFNNIPSALRVPLTYIEFDNTKAVSGPPTALHKVLMLGTKLATGSAKAGEAVRVSAYAQAKTLFGRGSQLAEMVKTFKAHNSTLDLWVLPLDEAPSGAKATGSVQITGTATQAGTFSLMIAGNNYKTAVTSGDTADVVAGKLQKLIAADQDVPVVATVAGNTITLTCRFKGETGNEIDLRCNYYSGEAFPEGLKATITDMKNGAVNPDMSVAITGLGAEWWNYIINPFTDTESLNLLRADLVKRWGPLKQIDGICFMAKRGTHAEVTTFAEQRNDYLFSLLATHKAPQPAYLWASAYAAVVAGSLAIDPARPVQTLVMDLLPPSMSDRWDLPERNTLLYSGVSTYTVNAGSQPQVEAAITMYRKNAFGDNDESYLYVETIATLSYLRYAIRSRITQKFPRHKLANDGTRIGPGQAIVTPKIIRNELLALFTELEFAGLVEDFEQFNQTLFVERDSNNPCRVNVLSNENLVNQFRIYAHAIQFIL.

The protein belongs to the myoviridae tail sheath protein family.

In terms of biological role, major component of the tail. In Haemophilus influenzae (strain ATCC 51907 / DSM 11121 / KW20 / Rd), this protein is Mu-like prophage FluMu tail sheath protein.